Consider the following 232-residue polypeptide: Large ribosomal subunit protein uL1 (232 aa).

This sequence belongs to the universal ribosomal protein uL1 family. Part of the 50S ribosomal subunit.

Its function is as follows. Binds directly to 23S rRNA. The L1 stalk is quite mobile in the ribosome, and is involved in E site tRNA release. In terms of biological role, protein L1 is also a translational repressor protein, it controls the translation of the L11 operon by binding to its mRNA. In Coxiella burnetii (strain CbuK_Q154) (Coxiella burnetii (strain Q154)), this protein is Large ribosomal subunit protein uL1.